Reading from the N-terminus, the 934-residue chain is MAPVRGDGMRGLAVFISDIRNCKSKEAEIKRINKELANIRSKFKGDKTLDGYQKKKYVCKLLFIFLLGHDIDFGHMEAVNLLSSNKYSEKQIGYLFISVLVNTNSDLIKLIIQSIKNDLQSRNPIHVNLALQCIANIGSQDMAEAFSNEIPKLLVSGDTMDVVKQSAALCLLRLFRTCPDIIPGGEWTSRIIHLLNDQHMGVVTAATSLIDALVKKNPEEYKGCVSLAVSRLSRIVTASYTDLQDYTYYFVPAPWLSVKLLRLLQNYNPPTEDPGVRGRLNECLETILNKAQEPPKSKKVQHSNAKNAVLFEAINLIIHNDSEPSLLVRACNQLGQFLSNRETNLRYLALESMCHLATSEFSHEAVKKHQEVVILSMKMEKDVSVRQQAVDLLYAMCDRSNAEEIVQEMLNYLETADYSIREEMVLKVAILAEKYATDYTWYVDVILNLIRIAGDYVSEEVWYRVIQIVINREEVQGYAAKTVFEALQAPACHENMVKVGGYILGEFGNLIAGDSRSAPMVQFKLLHSKYHLCSSMTRALLLSTYIKFINLFPEIRGTIQDVFRQHSNLRSADAELQQRASEYLQLSIVASTDVLATVLEEMPSFPERESSILAVLKKKKPGRVPENAEIRETKSPVPNSHNNAHSNAQTNHTSSANNANASSDLLGLSTPPASQSGTLIDVLGDIYSTANGNSNVVNNSKKFVFKNNGVLFENDLLQIGVKSEFRQNLGRLGLYYGNKTQTALQNFVPTLQWSAEDALKLNVQIKAVEPTLEAGAQIQQLLTAECIDHYLGAPSIVISFRVSGGAPQKITVNLPLTINKFFEPTEMNAESFFARWRNLGGEQQRAQRVFKAQQPLDLPGARNKLTGFGMQLLDSIDPNPDNMVCAGIIHTQAHKVGCLLRLEPNKQAQMFRLTIRSSLEAVTQEICDLLVDQF.

The segment at 623–670 (RVPENAEIRETKSPVPNSHNNAHSNAQTNHTSSANNANASSDLLGLST) is disordered. Positions 636-645 (PVPNSHNNAH) are enriched in polar residues. Positions 646-663 (SNAQTNHTSSANNANASS) are enriched in low complexity.

It belongs to the adapter complexes large subunit family. In terms of assembly, adaptor protein complex 2 (AP-2) is a heterotetramer composed of two large adaptins (alpha-type and beta-type subunits), a medium adaptin (mu-type subunit AP50) and a small adaptin (sigma-type subunit AP17).

It localises to the cell membrane. Its subcellular location is the membrane. The protein localises to the coated pit. Adaptins are components of the adapter complexes which link clathrin to receptors in coated vesicles. Clathrin-associated protein complexes are believed to interact with the cytoplasmic tails of membrane proteins, leading to their selection and concentration. Alpha adaptin is a subunit of the plasma membrane adapter. The chain is AP-2 complex subunit alpha from Anopheles gambiae (African malaria mosquito).